Here is a 414-residue protein sequence, read N- to C-terminus: 2,3-diketo-5-methylthiopentyl-1-phosphate enolase (414 aa).

Residue Lys-99 is the Proton acceptor of the active site. Substrate-binding positions include Lys-148, 174-177 (KDDE), His-265, Gly-338, and 360-361 (GG). The Mg(2+) site is built by Lys-174, Asp-176, and Glu-177. Lys-174 is subject to N6-carboxylysine.

Belongs to the RuBisCO large chain family. Type IV subfamily. Homodimer. The cofactor is Mg(2+).

The catalysed reaction is 5-methylsulfanyl-2,3-dioxopentyl phosphate = 2-hydroxy-5-methylsulfanyl-3-oxopent-1-enyl phosphate. The protein operates within amino-acid biosynthesis; L-methionine biosynthesis via salvage pathway; L-methionine from S-methyl-5-thio-alpha-D-ribose 1-phosphate: step 3/6. Functionally, catalyzes the enolization of 2,3-diketo-5-methylthiopentyl-1-phosphate (DK-MTP-1-P) into 2-hydroxy-3-keto-5-methylthiopentenyl-1-phosphate (HK-MTPenyl-1-P). This chain is 2,3-diketo-5-methylthiopentyl-1-phosphate enolase, found in Bacillus cereus (strain AH187).